A 476-amino-acid chain; its full sequence is Bifunctional protein HldE (476 aa).

The tract at residues Met-1–Ser-318 is ribokinase. Asn-195 to Glu-198 is a binding site for ATP. Asp-264 is an active-site residue. A cytidylyltransferase region spans residues Met-344 to Gly-476.

In the N-terminal section; belongs to the carbohydrate kinase PfkB family. The protein in the C-terminal section; belongs to the cytidylyltransferase family. As to quaternary structure, homodimer.

It carries out the reaction D-glycero-beta-D-manno-heptose 7-phosphate + ATP = D-glycero-beta-D-manno-heptose 1,7-bisphosphate + ADP + H(+). The catalysed reaction is D-glycero-beta-D-manno-heptose 1-phosphate + ATP + H(+) = ADP-D-glycero-beta-D-manno-heptose + diphosphate. Its pathway is nucleotide-sugar biosynthesis; ADP-L-glycero-beta-D-manno-heptose biosynthesis; ADP-L-glycero-beta-D-manno-heptose from D-glycero-beta-D-manno-heptose 7-phosphate: step 1/4. The protein operates within nucleotide-sugar biosynthesis; ADP-L-glycero-beta-D-manno-heptose biosynthesis; ADP-L-glycero-beta-D-manno-heptose from D-glycero-beta-D-manno-heptose 7-phosphate: step 3/4. Catalyzes the phosphorylation of D-glycero-D-manno-heptose 7-phosphate at the C-1 position to selectively form D-glycero-beta-D-manno-heptose-1,7-bisphosphate. In terms of biological role, catalyzes the ADP transfer from ATP to D-glycero-beta-D-manno-heptose 1-phosphate, yielding ADP-D-glycero-beta-D-manno-heptose. This chain is Bifunctional protein HldE, found in Aliivibrio salmonicida (strain LFI1238) (Vibrio salmonicida (strain LFI1238)).